A 90-amino-acid polypeptide reads, in one-letter code: Probable Fe(2+)-trafficking protein (90 aa).

This sequence belongs to the Fe(2+)-trafficking protein family.

Its function is as follows. Could be a mediator in iron transactions between iron acquisition and iron-requiring processes, such as synthesis and/or repair of Fe-S clusters in biosynthetic enzymes. The chain is Probable Fe(2+)-trafficking protein from Polynucleobacter asymbioticus (strain DSM 18221 / CIP 109841 / QLW-P1DMWA-1) (Polynucleobacter necessarius subsp. asymbioticus).